The following is a 553-amino-acid chain: Arginine--tRNA ligase (553 aa).

Residues 130 to 140 (ANPTGDLHIGH) carry the 'HIGH' region motif.

This sequence belongs to the class-I aminoacyl-tRNA synthetase family. As to quaternary structure, monomer.

The protein resides in the cytoplasm. It carries out the reaction tRNA(Arg) + L-arginine + ATP = L-arginyl-tRNA(Arg) + AMP + diphosphate. The sequence is that of Arginine--tRNA ligase from Staphylococcus epidermidis (strain ATCC 35984 / DSM 28319 / BCRC 17069 / CCUG 31568 / BM 3577 / RP62A).